A 469-amino-acid polypeptide reads, in one-letter code: Glutamate--tRNA ligase (469 aa).

The 'HIGH' region signature appears at proline 9–glycine 19. Residues cysteine 98, cysteine 100, cysteine 125, and aspartate 127 each contribute to the Zn(2+) site. The short motif at lysine 237–arginine 241 is the 'KMSKS' region element. Lysine 240 is a binding site for ATP.

This sequence belongs to the class-I aminoacyl-tRNA synthetase family. Glutamate--tRNA ligase type 1 subfamily. As to quaternary structure, monomer. Zn(2+) is required as a cofactor.

The protein resides in the cytoplasm. The catalysed reaction is tRNA(Glu) + L-glutamate + ATP = L-glutamyl-tRNA(Glu) + AMP + diphosphate. Catalyzes the attachment of glutamate to tRNA(Glu) in a two-step reaction: glutamate is first activated by ATP to form Glu-AMP and then transferred to the acceptor end of tRNA(Glu). This is Glutamate--tRNA ligase from Serratia proteamaculans (strain 568).